The following is a 116-amino-acid chain: NADH-ubiquinone oxidoreductase chain 3 (116 aa).

3 helical membrane-spanning segments follow: residues 3-23 (LISTVILIASALSLILILVSF), 56-76 (FFLIAILFLLFDLEIALLLPL), and 87-107 (LTFMWATSVLALLTLGLIYEW).

The protein belongs to the complex I subunit 3 family.

The protein localises to the mitochondrion membrane. It carries out the reaction a ubiquinone + NADH + 5 H(+)(in) = a ubiquinol + NAD(+) + 4 H(+)(out). Core subunit of the mitochondrial membrane respiratory chain NADH dehydrogenase (Complex I) that is believed to belong to the minimal assembly required for catalysis. Complex I functions in the transfer of electrons from NADH to the respiratory chain. The immediate electron acceptor for the enzyme is believed to be ubiquinone. The chain is NADH-ubiquinone oxidoreductase chain 3 (MT-ND3) from Gadus morhua (Atlantic cod).